The following is a 131-amino-acid chain: Translation initiation factor 5A (131 aa).

A Hypusine modification is found at lysine 36.

The protein belongs to the eIF-5A family. In terms of processing, the N-terminus is blocked.

The protein resides in the cytoplasm. Functionally, functions by promoting the formation of the first peptide bond. In Sulfolobus acidocaldarius (strain ATCC 33909 / DSM 639 / JCM 8929 / NBRC 15157 / NCIMB 11770), this protein is Translation initiation factor 5A (eif5a).